A 236-amino-acid chain; its full sequence is Purine nucleoside phosphorylase DeoD-type (236 aa).

His-5 serves as a coordination point for a purine D-ribonucleoside. Residues Gly-21, Arg-25, Arg-44, and 88–91 (RVGT) each bind phosphate. Residues 180 to 182 (EME) and 204 to 205 (SD) contribute to the a purine D-ribonucleoside site. Asp-205 acts as the Proton donor in catalysis.

This sequence belongs to the PNP/UDP phosphorylase family. In terms of assembly, homohexamer; trimer of homodimers.

It carries out the reaction a purine D-ribonucleoside + phosphate = a purine nucleobase + alpha-D-ribose 1-phosphate. The enzyme catalyses a purine 2'-deoxy-D-ribonucleoside + phosphate = a purine nucleobase + 2-deoxy-alpha-D-ribose 1-phosphate. Functionally, catalyzes the reversible phosphorolytic breakdown of the N-glycosidic bond in the beta-(deoxy)ribonucleoside molecules, with the formation of the corresponding free purine bases and pentose-1-phosphate. The polypeptide is Purine nucleoside phosphorylase DeoD-type (Shewanella amazonensis (strain ATCC BAA-1098 / SB2B)).